A 173-amino-acid polypeptide reads, in one-letter code: Ribonuclease P/MRP protein subunit POP5 (173 aa).

Belongs to the eukaryotic/archaeal RNase P protein component 2 family. Component of nuclear RNase P and RNase MRP complexes. RNase P consists of an RNA moiety and at least 9 protein subunits including POP1, POP3, POP4, POP5, POP6, POP7, POP8, RPP1 and RPR2. RNase MRP complex consists of an RNA moiety and at least 10 protein subunits including POP1, POP3, POP4, POP5, POP6, POP7, POP8, RMP1, RPP1 and SNM1, many of which are shared with the RNase P complex.

It localises to the cytoplasm. Its subcellular location is the nucleus. It carries out the reaction Endonucleolytic cleavage of RNA, removing 5'-extranucleotides from tRNA precursor.. Component of ribonuclease P, a protein complex that generates mature tRNA molecules by cleaving their 5'-ends. Also a component of RNase MRP, which cleaves pre-rRNA sequences. This is Ribonuclease P/MRP protein subunit POP5 (POP5) from Saccharomyces cerevisiae (strain ATCC 204508 / S288c) (Baker's yeast).